The following is a 290-amino-acid chain: UPF0761 membrane protein Ent638_4092 (290 aa).

The next 6 helical transmembrane spans lie at 44 to 64, 104 to 124, 140 to 160, 183 to 203, 210 to 230, and 244 to 264; these read LLSL…FPMF, VGAC…DSAL, FAVY…SLAI, IFPL…VPTL, AIVG…GFAL, and VLAV…IVLL.

This sequence belongs to the UPF0761 family.

It is found in the cell inner membrane. The polypeptide is UPF0761 membrane protein Ent638_4092 (Enterobacter sp. (strain 638)).